We begin with the raw amino-acid sequence, 422 residues long: Retinoic acid receptor RXR-beta-B (422 aa).

The interval 1-89 (MNSLPPSTSA…SGPMLSQKRM (89 aa)) is modulating. 2 consecutive NR C4-type zinc fingers follow at residues 90-110 (CAIC…CEGC) and 126-150 (CRDN…YQKC). Residues 90–155 (CAICGDRSSG…RYQKCLAMGM (66 aa)) constitute a DNA-binding region (nuclear receptor). The interval 156-178 (KREAVQEERQKNKERDGDYECSS) is hinge. Residues 161 to 173 (QEERQKNKERDGD) are compositionally biased toward basic and acidic residues. Residues 161 to 182 (QEERQKNKERDGDYECSSSANE) are disordered. The region spanning 181 to 421 (NEEMPVEKIL…TFLMEMLESP (241 aa)) is the NR LBD domain.

This sequence belongs to the nuclear hormone receptor family. NR2 subfamily. Homodimer. Heterodimer; with a rar molecule. Binds DNA preferentially as a rar/rxr heterodimer. Heterodimerizes with rarga. In terms of tissue distribution, shows uniform expression from the blastula to mid-gastrula stages. At 12 hours post-fertilization (hpf), expressed ubiquitously but more weakly. At 24 hpf, restricted to the ventral diencephalon, pharangeal endoderm and trunk and tail mesoderm; mesoderm expression is in medial cells of each somite along the dorsoventral axis, forming stripes. At 48 hpf, expressed in forebrain, eye, midbrain and anterior hindbrain.

It is found in the nucleus. Its function is as follows. Receptor for retinoic acid. Retinoic acid receptors bind as heterodimers to their target response elements in response to their ligands, all-trans or 9-cis retinoic acid, and regulate gene expression in various biological processes. The rar/rxr heterodimers bind to the retinoic acid response elements (RARE) composed of tandem 5'-AGGTCA-3' sites known as DR1-DR5. The high affinity ligand for rxrs is 9-cis retinoic acid. This Danio rerio (Zebrafish) protein is Retinoic acid receptor RXR-beta-B (rxrbb).